We begin with the raw amino-acid sequence, 227 residues long: Cytochrome c oxidase subunit 2 (227 aa).

Residues 1–14 (MAYPFQLGFQDATS) are Mitochondrial intermembrane-facing. A helical membrane pass occupies residues 15–45 (PIMEELLHFHDHTLMIVFLISSLVLYIISLM). The Mitochondrial matrix segment spans residues 46–59 (LTTKLTHTSTMDAQ). A helical transmembrane segment spans residues 60-87 (EVETIWTILPAIILILIALPSLRILYMM). The Mitochondrial intermembrane segment spans residues 88–227 (DEINNPSLTV…HFEKWSASML (140 aa)). 6 residues coordinate Cu cation: histidine 161, cysteine 196, glutamate 198, cysteine 200, histidine 204, and methionine 207. Position 198 (glutamate 198) interacts with Mg(2+).

Belongs to the cytochrome c oxidase subunit 2 family. In terms of assembly, component of the cytochrome c oxidase (complex IV, CIV), a multisubunit enzyme composed of 14 subunits. The complex is composed of a catalytic core of 3 subunits MT-CO1, MT-CO2 and MT-CO3, encoded in the mitochondrial DNA, and 11 supernumerary subunits COX4I, COX5A, COX5B, COX6A, COX6B, COX6C, COX7A, COX7B, COX7C, COX8 and NDUFA4, which are encoded in the nuclear genome. The complex exists as a monomer or a dimer and forms supercomplexes (SCs) in the inner mitochondrial membrane with NADH-ubiquinone oxidoreductase (complex I, CI) and ubiquinol-cytochrome c oxidoreductase (cytochrome b-c1 complex, complex III, CIII), resulting in different assemblies (supercomplex SCI(1)III(2)IV(1) and megacomplex MCI(2)III(2)IV(2)). Found in a complex with TMEM177, COA6, COX18, COX20, SCO1 and SCO2. Interacts with TMEM177 in a COX20-dependent manner. Interacts with COX20. Interacts with COX16. Cu cation serves as cofactor.

The protein localises to the mitochondrion inner membrane. The enzyme catalyses 4 Fe(II)-[cytochrome c] + O2 + 8 H(+)(in) = 4 Fe(III)-[cytochrome c] + 2 H2O + 4 H(+)(out). Functionally, component of the cytochrome c oxidase, the last enzyme in the mitochondrial electron transport chain which drives oxidative phosphorylation. The respiratory chain contains 3 multisubunit complexes succinate dehydrogenase (complex II, CII), ubiquinol-cytochrome c oxidoreductase (cytochrome b-c1 complex, complex III, CIII) and cytochrome c oxidase (complex IV, CIV), that cooperate to transfer electrons derived from NADH and succinate to molecular oxygen, creating an electrochemical gradient over the inner membrane that drives transmembrane transport and the ATP synthase. Cytochrome c oxidase is the component of the respiratory chain that catalyzes the reduction of oxygen to water. Electrons originating from reduced cytochrome c in the intermembrane space (IMS) are transferred via the dinuclear copper A center (CU(A)) of subunit 2 and heme A of subunit 1 to the active site in subunit 1, a binuclear center (BNC) formed by heme A3 and copper B (CU(B)). The BNC reduces molecular oxygen to 2 water molecules using 4 electrons from cytochrome c in the IMS and 4 protons from the mitochondrial matrix. This Ceratotherium simum (White rhinoceros) protein is Cytochrome c oxidase subunit 2 (MT-CO2).